Here is a 313-residue protein sequence, read N- to C-terminus: Ribosomal RNA small subunit methyltransferase H (313 aa).

S-adenosyl-L-methionine contacts are provided by residues 35 to 37, Asp-55, Phe-79, Asp-101, and Gln-108; that span reads GGH.

The protein belongs to the methyltransferase superfamily. RsmH family.

It is found in the cytoplasm. The catalysed reaction is cytidine(1402) in 16S rRNA + S-adenosyl-L-methionine = N(4)-methylcytidine(1402) in 16S rRNA + S-adenosyl-L-homocysteine + H(+). Specifically methylates the N4 position of cytidine in position 1402 (C1402) of 16S rRNA. This chain is Ribosomal RNA small subunit methyltransferase H, found in Escherichia coli O6:H1 (strain CFT073 / ATCC 700928 / UPEC).